We begin with the raw amino-acid sequence, 206 residues long: LexA repressor (206 aa).

The segment at residues 28–48 (RAEIASELGFKSANAAEEHLK) is a DNA-binding region (H-T-H motif). Active-site for autocatalytic cleavage activity residues include serine 122 and lysine 160.

The protein belongs to the peptidase S24 family. In terms of assembly, homodimer.

The catalysed reaction is Hydrolysis of Ala-|-Gly bond in repressor LexA.. Functionally, represses a number of genes involved in the response to DNA damage (SOS response), including recA and lexA. In the presence of single-stranded DNA, RecA interacts with LexA causing an autocatalytic cleavage which disrupts the DNA-binding part of LexA, leading to derepression of the SOS regulon and eventually DNA repair. This Tolumonas auensis (strain DSM 9187 / NBRC 110442 / TA 4) protein is LexA repressor.